Here is a 257-residue protein sequence, read N- to C-terminus: MSGFDNFNTDFYQSSYSVDDQNQGGYGYSNTDEPYKPYGQYDYSQPMGYSAAPGMMQPQQPYTGQIYQPTPAFTPTSSQSMYSSSFEDEPPLLEELGINFDHIWQKTLTVLHPLKASDGSIMNETDLAGPMVFCLAFGATLLLTGKIQFGYVYGISAIGCLGMYCLLNLMSMTGVSFGCVASVLGYCLLPMIILSSFGVIFSLQGIMGIILTAAIIGWCSLSASKIFISALAMDGQQLLVAYPCALLYGVFALISVF.

Residues 1–124 (MSGFDNFNTD…KASDGSIMNE (124 aa)) are Cytoplasmic-facing. A helical transmembrane segment spans residues 125–145 (TDLAGPMVFCLAFGATLLLTG). A topological domain (lumenal) is located at residue Lys-146. A helical transmembrane segment spans residues 147–167 (IQFGYVYGISAIGCLGMYCLL). Residues 168 to 173 (NLMSMT) are Cytoplasmic-facing. The helical transmembrane segment at 174–194 (GVSFGCVASVLGYCLLPMIIL) threads the bilayer. The Lumenal segment spans residues 195–196 (SS). The chain crosses the membrane as a helical span at residues 197 to 217 (FGVIFSLQGIMGIILTAAIIG). Over 218–236 (WCSLSASKIFISALAMDGQ) the chain is Cytoplasmic. A helical transmembrane segment spans residues 237–257 (QLLVAYPCALLYGVFALISVF).

The protein belongs to the YIP1 family.

It is found in the endoplasmic reticulum membrane. It localises to the golgi apparatus. The protein resides in the cis-Golgi network membrane. Its function is as follows. Plays a role in transport between endoplasmic reticulum and Golgi. The chain is Protein YIPF5 (yipf5) from Danio rerio (Zebrafish).